A 285-amino-acid chain; its full sequence is MSLQQKIKAYLKLGKLGVVSLLDLAAVAGAFLAYKHGISLLPIIPMFIGGTLASMGAMIINSGIEIDRDKVMSRTSKRPTVVGYVNRKEAIIVGSLLAILGTALGFIDNILTAFFIALGVVIYIFVYTILLKPRTWLNIVIGGFAGSAAAWAGYTSLTNSLTLEGFLLGFLIFMWTPGHFWSLALKYREDYVNAHYPMLPAVVGITTSARAIAISNTLMIPIVLLLGYYINLIALIAFSILSLFLMFLSYRLILNPTKEEAIKSFIFSNIYLMLILLIMIIVKLI.

A run of 9 helical transmembrane segments spans residues 13–33, 40–60, 89–109, 110–130, 137–157, 165–185, 194–214, 218–238, and 265–285; these read LGKLGVVSLLDLAAVAGAFLA, LLPIIPMFIGGTLASMGAMII, EAIIVGSLLAILGTALGFIDN, ILTAFFIALGVVIYIFVYTIL, LNIVIGGFAGSAAAWAGYTSL, GFLLGFLIFMWTPGHFWSLAL, AHYPMLPAVVGITTSARAIAI, LMIPIVLLLGYYINLIALIAF, and FIFSNIYLMLILLIMIIVKLI.

Belongs to the UbiA prenyltransferase family. Protoheme IX farnesyltransferase subfamily.

It localises to the cell membrane. It catalyses the reaction heme b + (2E,6E)-farnesyl diphosphate + H2O = Fe(II)-heme o + diphosphate. It functions in the pathway porphyrin-containing compound metabolism; heme O biosynthesis; heme O from protoheme: step 1/1. Its function is as follows. Converts heme B (protoheme IX) to heme O by substitution of the vinyl group on carbon 2 of heme B porphyrin ring with a hydroxyethyl farnesyl side group. This is Protoheme IX farnesyltransferase from Saccharolobus islandicus (strain Y.G.57.14 / Yellowstone #1) (Sulfolobus islandicus).